Here is a 310-residue protein sequence, read N- to C-terminus: MKVGIVGSGMVGSATAYALALLGVAREVVLVDLDRKLAQAHAEDILHATPFAHPVWVRAGSYGDLEGARAVVLAAGVAQRPGETRLQLLDRNAQVFAQVVPRVLEAAPEAVLLVATNPVDVMTQVAYRLSALPPGRVVGSGTILDTARFRALLAEHLRVAPQSVHAYVLGEHGDSEVLVWSSAQVGGVPLLEFAEARGRALSPEDRARIDEGVRRAAYRIIEGKGATYYGIGAGLARLVRAILTDEKGVYTVSAFTPEVEGVLEVSLSLPRILGAGGVEGTVYPSLSPEEREALRRSAEILKEAAFALGF.

NAD(+) is bound by residues 10–11 (MV), Asp32, Tyr62, and 76–77 (GV). Residues Gln79, Arg85, and 117–120 (NPVD) contribute to the substrate site. Residues 115 to 117 (ATN) and Ser140 each bind NAD(+). Position 145–148 (145–148 (DTAR)) interacts with substrate. Beta-D-fructose 1,6-bisphosphate-binding positions include Arg150 and 162–167 (QSVHAY). His172 (proton acceptor) is an active-site residue. Tyr218 carries the phosphotyrosine modification. Substrate is bound at residue Thr227.

It belongs to the LDH/MDH superfamily. LDH family. In terms of assembly, homotetramer.

The protein resides in the cytoplasm. It catalyses the reaction (S)-lactate + NAD(+) = pyruvate + NADH + H(+). It participates in fermentation; pyruvate fermentation to lactate; (S)-lactate from pyruvate: step 1/1. With respect to regulation, allosterically activated by fructose 1,6-bisphosphate (FBP). It binds two fructose 1,6-bisphosphate (FBP) molecules per tetramer. Functionally, catalyzes the conversion of lactate to pyruvate. The sequence is that of L-lactate dehydrogenase from Thermus caldophilus.